Here is a 520-residue protein sequence, read N- to C-terminus: Protein FAM124A (520 aa).

Disordered regions lie at residues 1-34 and 311-334; these read MDRK…ELSV and FKSG…SQMD. The segment covering 20-32 has biased composition (low complexity); the sequence is SDYSRLSSTSSEL.

Belongs to the FAM124 family.

The chain is Protein FAM124A (fam124a) from Xenopus laevis (African clawed frog).